We begin with the raw amino-acid sequence, 144 residues long: Bacilliredoxin SSP1311 (144 aa).

Belongs to the bacilliredoxin family.

The chain is Bacilliredoxin SSP1311 from Staphylococcus saprophyticus subsp. saprophyticus (strain ATCC 15305 / DSM 20229 / NCIMB 8711 / NCTC 7292 / S-41).